Reading from the N-terminus, the 212-residue chain is Large ribosomal subunit protein bL25 (212 aa).

The tract at residues 179 to 212 (EPEEEELPEDDEAAAEGEDAAAGEEAEAPAESED) is disordered.

The protein belongs to the bacterial ribosomal protein bL25 family. CTC subfamily. Part of the 50S ribosomal subunit; part of the 5S rRNA/L5/L18/L25 subcomplex. Contacts the 5S rRNA. Binds to the 5S rRNA independently of L5 and L18.

Its function is as follows. This is one of the proteins that binds to the 5S RNA in the ribosome where it forms part of the central protuberance. In Corynebacterium urealyticum (strain ATCC 43042 / DSM 7109), this protein is Large ribosomal subunit protein bL25.